The following is a 340-amino-acid chain: Putative esterase YheT (340 aa).

Positions 73–312 constitute an AB hydrolase-1 domain; it reads PRLVVFHGLE…TEHGGHVGFI (240 aa). Catalysis depends on charge relay system residues S153, D280, and H308.

Belongs to the AB hydrolase superfamily. AB hydrolase 4 family.

In Escherichia coli (strain K12), this protein is Putative esterase YheT (yheT).